The chain runs to 497 residues: Probable cytosol aminopeptidase (497 aa).

The Mn(2+) site is built by Lys-263 and Asp-268. Lys-275 is a catalytic residue. Mn(2+) is bound by residues Asp-286, Asp-345, and Glu-347. Arg-349 is an active-site residue.

Belongs to the peptidase M17 family. The cofactor is Mn(2+).

It is found in the cytoplasm. It catalyses the reaction Release of an N-terminal amino acid, Xaa-|-Yaa-, in which Xaa is preferably Leu, but may be other amino acids including Pro although not Arg or Lys, and Yaa may be Pro. Amino acid amides and methyl esters are also readily hydrolyzed, but rates on arylamides are exceedingly low.. It carries out the reaction Release of an N-terminal amino acid, preferentially leucine, but not glutamic or aspartic acids.. Its function is as follows. Presumably involved in the processing and regular turnover of intracellular proteins. Catalyzes the removal of unsubstituted N-terminal amino acids from various peptides. This is Probable cytosol aminopeptidase from Sinorhizobium medicae (strain WSM419) (Ensifer medicae).